We begin with the raw amino-acid sequence, 226 residues long: 3-dehydroquinate dehydratase (226 aa).

3-dehydroquinate-binding positions include 30-32 (EWR) and R62. H118 (proton donor/acceptor) is an active-site residue. K143 functions as the Schiff-base intermediate with substrate in the catalytic mechanism. Residues R186, S205, and Q209 each coordinate 3-dehydroquinate.

It belongs to the type-I 3-dehydroquinase family. In terms of assembly, homodimer.

The enzyme catalyses 3-dehydroquinate = 3-dehydroshikimate + H2O. The protein operates within metabolic intermediate biosynthesis; chorismate biosynthesis; chorismate from D-erythrose 4-phosphate and phosphoenolpyruvate: step 3/7. In terms of biological role, involved in the third step of the chorismate pathway, which leads to the biosynthesis of aromatic amino acids. Catalyzes the cis-dehydration of 3-dehydroquinate (DHQ) and introduces the first double bond of the aromatic ring to yield 3-dehydroshikimate. This chain is 3-dehydroquinate dehydratase, found in Streptococcus equi subsp. zooepidemicus (strain H70).